Reading from the N-terminus, the 396-residue chain is Elongation factor Tu (396 aa).

Positions 10-206 (KPHVNVGTIG…TLDEYIPEPE (197 aa)) constitute a tr-type G domain. Residues 19–26 (GHVDHGKT) form a G1 region. Residue 19–26 (GHVDHGKT) participates in GTP binding. Thr26 contributes to the Mg(2+) binding site. A G2 region spans residues 60-64 (GITIA). The segment at 81–84 (DCPG) is G3. GTP is bound by residues 81-85 (DCPGH) and 136-139 (NKAD). Positions 136–139 (NKAD) are G4. Residues 174–176 (SAL) are G5.

Belongs to the TRAFAC class translation factor GTPase superfamily. Classic translation factor GTPase family. EF-Tu/EF-1A subfamily. In terms of assembly, monomer.

It is found in the cytoplasm. The enzyme catalyses GTP + H2O = GDP + phosphate + H(+). Its function is as follows. GTP hydrolase that promotes the GTP-dependent binding of aminoacyl-tRNA to the A-site of ribosomes during protein biosynthesis. This chain is Elongation factor Tu, found in Alcanivorax borkumensis (strain ATCC 700651 / DSM 11573 / NCIMB 13689 / SK2).